The primary structure comprises 998 residues: Protein Smaug (998 aa).

Polar residues predominate over residues 1-37; the sequence is MKYATGTDNAMTSGISGQTNNSNSASNEMQPTTSTPT. 3 disordered regions span residues 1–45, 50–69, and 329–370; these read MKYA…EATS, TATYANGNPNPSANPSQSQP, and LCPA…GSSS. A compositionally biased stretch (low complexity) spans 329–338; that stretch reads LCPASGSRSS. Residues Ser-564 and Ser-575 each carry the phosphoserine modification. The tract at residues 583–763 is interaction with cup; that stretch reads EFKPNYIKFH…KDLKFKLSKM (181 aa). One can recognise an SAM domain in the interval 600 to 654; sequence GIGLWLKSLRLHKYIELFKNMTYEEMLLITEDFLQSVGVTKGASHKLALCIDKLK. Disordered stretches follow at residues 773 to 892 and 942 to 977; these read HVKP…MQQM and NNGSNDNLGLERNQQPQQQQQRKLSGGVSSAEQQPK. Polar residues-rich tracts occupy residues 801-822 and 854-864; these read KSGSNDRINNRKNSNDMLNFSL and HQPQYKSSSYP. A Phosphoserine modification is found at Ser-971.

Belongs to the SMAUG family. Interacts with oskar (osk). Binds to the 3'-UTR of nos. Interacts with cup, which in turn recruits eIF4-E, leading to an indirect interaction between smg and eIF4-E that prevents mRNA translation.

The protein localises to the cytoplasm. Functionally, translation regulator that binds to the 3'-UTR of specific mRNAs such as nanos (nos) and prevent their translation. Prevents translation of unlocalized nos in the bulk cytoplasm via the recruitment of cup. This Drosophila simulans (Fruit fly) protein is Protein Smaug.